We begin with the raw amino-acid sequence, 266 residues long: DNA repair protein RecO (266 aa).

It belongs to the RecO family.

Its function is as follows. Involved in DNA repair and RecF pathway recombination. The protein is DNA repair protein RecO of Synechococcus elongatus (strain ATCC 33912 / PCC 7942 / FACHB-805) (Anacystis nidulans R2).